The primary structure comprises 452 residues: GTPase Der (452 aa).

EngA-type G domains are found at residues 4–169 (PIVA…PPPE) and 177–352 (IKVA…EEHR). GTP is bound by residues 10–17 (GRPNVGKS), 57–61 (DTGGL), 120–123 (NKCE), 183–190 (GRPNVGKS), 230–234 (DTAGI), and 295–298 (NKWD). In terms of domain architecture, KH-like spans 353 to 438 (RRVTTAVINE…PIRLLWRGKK (86 aa)).

The protein belongs to the TRAFAC class TrmE-Era-EngA-EngB-Septin-like GTPase superfamily. EngA (Der) GTPase family. As to quaternary structure, associates with the 50S ribosomal subunit.

Its function is as follows. GTPase that plays an essential role in the late steps of ribosome biogenesis. This is GTPase Der from Rippkaea orientalis (strain PCC 8801 / RF-1) (Cyanothece sp. (strain PCC 8801)).